A 150-amino-acid chain; its full sequence is Placenta-specific protein 4 (150 aa).

As to expression, expressed in placental syncytiotrophoblast and choriocarcinoma cells.

The polypeptide is Placenta-specific protein 4 (PLAC4) (Homo sapiens (Human)).